Here is a 770-residue protein sequence, read N- to C-terminus: Nucleus-vacuole junction protein 2 (770 aa).

At 1-5 the chain is on the cytoplasmic side; that stretch reads MASLK. The chain crosses the membrane as a helical; Signal-anchor for type II membrane protein span at residues 6-26; the sequence is VFLAVYLLGGITFLPLVLFTL. Over 27 to 770 the chain is Lumenal; it reads YKIHLLYSNL…EFEEQREPKL (744 aa). In terms of domain architecture, PH spans 114-266; that stretch reads TALQEQILQR…WYYQLINASK (153 aa). Asn-228, Asn-263, Asn-279, Asn-300, Asn-391, Asn-528, and Asn-529 each carry an N-linked (GlcNAc...) asparagine glycan. The SMP-LTD domain maps to 304 to 504; the sequence is NQLTTKWLNA…YPTPNEVYRG (201 aa). Disordered stretches follow at residues 541–566, 578–600, and 615–770; these read EGGMKTQSRIKKALRPERKKENLKDL, TQTTVTTATNDDVSSSENSTKSR, and KDNV…EPKL. A compositionally biased stretch (basic and acidic residues) spans 554-566; sequence LRPERKKENLKDL. Polar residues predominate over residues 587–596; that stretch reads NDDVSSSENS. Asn-595 and Asn-620 each carry an N-linked (GlcNAc...) asparagine glycan. A phosphoserine mark is found at Ser-640 and Ser-669. Over residues 679 to 688 the composition is skewed to basic and acidic residues; the sequence is LEGRKEKDTE. A glycan (N-linked (GlcNAc...) asparagine) is linked at Asn-700. 2 stretches are compositionally biased toward polar residues: residues 713 to 725 and 736 to 751; these read FSVSSNDSQNSLK and LESSQAFVKKTSQNRF. Ser-717 is modified (phosphoserine). Asn-718 is a glycosylation site (N-linked (GlcNAc...) asparagine). A phosphoserine mark is found at Ser-720 and Ser-723. The segment covering 756–770 has biased composition (basic and acidic residues); that stretch reads FKQDLEFEEQREPKL.

The protein resides in the endoplasmic reticulum membrane. Its subcellular location is the nucleus membrane. Functionally, during endoplasmic reticulum (ER) stress or when cellular ceramide levels increase, induces contacts between the ER and medial-Golgi complex to facilitate non-vesicular transport of ceramides from the ER to the Golgi complex where they are converted to complex sphingolipids, preventing toxic ceramide accumulation. In Saccharomyces cerevisiae (strain ATCC 204508 / S288c) (Baker's yeast), this protein is Nucleus-vacuole junction protein 2.